Here is a 124-residue protein sequence, read N- to C-terminus: Single-stranded DNA-binding protein (124 aa).

The protein belongs to the phi29likevirus single-strand-binding protein family. In terms of assembly, monomer.

Functionally, single-stranded DNA binding protein required for the elongation during viral DNA replication by strand displacement. Displaced viral DNA strands are transiently coated with the ssDNA-binding protein and therefore protected againt nucleases. The latter is then probably removed by the replisome that performs lagging strand synthesis or during the events that lead up to the recombination process. Has helix-destabilizing activity since it removes secondary structure from the ssDNA in replicative intermediates. This chain is Single-stranded DNA-binding protein (5), found in Bacillus subtilis (Bacteriophage PZA).